A 1053-amino-acid chain; its full sequence is CRISPR-associated endonuclease Cas9 (1053 aa).

Residues 1–41 (MKRNYILGLDIGITSVGYGIIDYETRDVIDAGVRLFKEANV) are ruvC-I. Asp-10 serves as the catalytic For RuvC-like nuclease domain. Mg(2+) is bound at residue Asp-10. Positions 41 to 426 (VENNEGRRSK…IFNRLKLVPK (386 aa)) are recognition lobe. The ruvC-II stretch occupies residues 435-481 (EIPTTLVDDFILSPVVKRSFIQSIKVINAIIKKYGLPNDIIIELARE). Residues Glu-477 and Glu-481 each contribute to the Mg(2+) site. Positions 480–646 (REKNSKDAQK…VQKDFINRNL (167 aa)) constitute an HNH Cas9-type domain. His-557 (proton acceptor for HNH nuclease domain) is an active-site residue. A ruvC-III region spans residues 650–775 (RYATRGLMNL…FKDYKYSHRV (126 aa)). His-701 provides a ligand contact to Mg(2+). Tyr-789 lines the RNA pocket. 2 PAM substrate-binding regions span residues 882–889 (YYGNKLNA) and 985–993 (NNDLLNRIE). The tract at residues 910–1053 (KPYRFDVYLD…KKHPQIIKKG (144 aa)) is PAM-interacting domain (PI).

This sequence belongs to the CRISPR-associated Cas9 family. Subtype II-A subfamily. In terms of assembly, monomer. Binds crRNA and tracrRNA. Requires Mg(2+) as cofactor.

Functionally, CRISPR (clustered regularly interspaced short palindromic repeat) is an adaptive immune system that provides protection against mobile genetic elements (viruses, transposable elements and conjugative plasmids). CRISPR clusters contain spacers, sequences complementary to antecedent mobile elements, and target invading nucleic acids. CRISPR clusters are transcribed and processed into CRISPR RNA (crRNA). In type II CRISPR systems correct processing of pre-crRNA requires a trans-encoded small RNA (tracrRNA), endogenous ribonuclease 3 (rnc) and this protein. The tracrRNA serves as a guide for ribonuclease 3-aided processing of pre-crRNA. Subsequently Cas9/crRNA/tracrRNA endonucleolytically cleaves linear or circular dsDNA target complementary to the spacer; Cas9 is inactive in the absence of the 2 guide RNAs (gRNA). Cas9 recognizes the protospacer adjacent motif (PAM) in the CRISPR repeat sequences to help distinguish self versus nonself, as targets within the bacterial CRISPR locus do not have PAMs. PAM recognition is also required for catalytic activity. This chain is CRISPR-associated endonuclease Cas9, found in Staphylococcus aureus.